Consider the following 304-residue polypeptide: Small ribosomal subunit protein uS2 (304 aa).

S2 carries the N-acetylserine modification. Laminin-binding stretches follow at residues 161-180 (IPCNNKGHHSVGLMWWMLAR) and 205-229 (RDPEEIEKEEQAAAEKAVGKEEFQG). [DE]-W-[ST] repeat units follow at residues 230 to 232 (EWS), 245 to 247 (DWS), 275 to 277 (DWS), 284 to 286 (DWS), and 302 to 304 (DWS). The segment at 242-304 (EVADWSEGVA…DWGGATSDWS (63 aa)) is laminin-binding. Residues 257–304 (IQQFPAGTPAPAPAVKTEDWSTQPATEDWSTAPTAQASDWGGATSDWS) form a disordered region. Polar residues predominate over residues 276–293 (WSTQPATEDWSTAPTAQA).

The protein belongs to the universal ribosomal protein uS2 family. Monomer (37LRP) and homodimer (67LR). Component of the small ribosomal subunit. Mature ribosomes consist of a small (40S) and a large (60S) subunit. The 40S subunit contains about 33 different proteins and 1 molecule of RNA (18S). The 60S subunit contains about 49 different proteins and 3 molecules of RNA (28S, 5.8S and 5S). Interacts with rps21. Interacts with several laminins including at least lamb1. Interacts with mdk. Post-translationally, acylated. Acylation may be a prerequisite for conversion of the monomeric 37 kDa laminin receptor precursor (37LRP) to the mature dimeric 67 kDa laminin receptor (67LR), and may provide a mechanism for membrane association. In terms of processing, cleaved by stromelysin-3 (ST3) at the cell surface. Cleavage by stromelysin-3 may be a mechanism to alter cell-extracellular matrix interactions.

It is found in the cell membrane. Its subcellular location is the cytoplasm. It localises to the nucleus. Functionally, required for the assembly and/or stability of the 40S ribosomal subunit. Required for the processing of the 20S rRNA-precursor to mature 18S rRNA in a late step of the maturation of 40S ribosomal subunits. Also functions as a cell surface receptor for laminin. Plays a role in cell adhesion to the basement membrane and in the consequent activation of signaling transduction pathways. May play a role in cell fate determination and tissue morphogenesis. In Sparus aurata (Gilthead sea bream), this protein is Small ribosomal subunit protein uS2 (rpsa).